The primary structure comprises 487 residues: Arginine ADP-riboxanase CopC (487 aa).

Residues 1-12 (MRVENHSPSLSK) show a composition bias toward polar residues. The disordered stretch occupies residues 1–27 (MRVENHSPSLSKLNPPEAGSGDPTAIG). Positions 137, 138, 139, 143, 150, 152, 154, and 157 each coordinate NAD(+). Nicotinamide is bound at residue His137. The ADP-D-ribose site is built by Ser139 and Leu143. 7 residues coordinate ADP-D-ribose: Ala152, Asn154, Leu157, Gly166, Asn167, Thr168, and Phe183. Residue Asn167 participates in NAD(+) binding. Phe183 provides a ligand contact to NAD(+). Phe183, Phe184, His202, and Phe207 together coordinate nicotinamide. His202 is an NAD(+) binding site. Residues Phe207 and Asp230 each coordinate ADP-D-ribose. 2 residues coordinate NAD(+): Asp230 and Glu325. Glu325 is a binding site for nicotinamide. Residue Glu325 is part of the active site. 2 ANK repeats span residues 368–398 (DAVT…EAGD) and 444–476 (SGET…LLSE).

Belongs to the OspC family. In terms of assembly, interacts with host calmodulin (CALM1, CALM2 and/or CALM3); specifically interacts with the apo form of calmodulin and calmodulin-binding is required to mediate arginine ADP-riboxanation of host caspases.

The protein resides in the secreted. It localises to the host cytoplasm. It catalyses the reaction L-arginyl-[protein] + NAD(+) = ADP-riboxanated L-argininyl-[protein] + nicotinamide + NH4(+) + H(+). Interaction with host calmodulin (CALM1, CALM2 and/or CALM3) is required to mediate arginine ADP-riboxanation of host caspases. Functionally, ADP-riboxanase effector that inhibits host cell programmed cell death. Acts by mediating arginine ADP-riboxanation of host caspases (CASP3, CASP7, CASP8 and CASP9), blocking their processing and activation. ADP-riboxanation of host apoptotic caspases (CASP3, CASP7, CASP8 and CASP9) prevents their activation, thereby inhibiting host cell apoptosis. ADP-riboxanation of host CASP8 also inhibits host cell necroptosis. ADP-riboxanation of host CASP3 also abolishes pyroptosis by preventing its ability to cleave GSDME. May also able to inactivate CASP4/CASP11, blocking inhibiting LPS-induced pyroptosis; however this activity is unsure in vivo. ADP-riboxanation takes place in several steps: CopC first binds host caspases and NAD(+); NAD(+) is hydrolyzed to nicotinamide and ADP-D-ribose. CopC then transfers the ADP-D-ribose to the modified arginine of caspases and forms the ADP-D-ribose-deacylization on arginine, leading to deamination to remove one N-omega group on target arginine. The polypeptide is Arginine ADP-riboxanase CopC (Chromobacterium violaceum (strain ATCC 12472 / DSM 30191 / JCM 1249 / CCUG 213 / NBRC 12614 / NCIMB 9131 / NCTC 9757 / MK)).